A 350-amino-acid chain; its full sequence is Biotin synthase (350 aa).

Residues 54-278 (REIQLSTLLS…TMPQSYVRLS (225 aa)) form the Radical SAM core domain. Residues cysteine 69, cysteine 73, and cysteine 76 each contribute to the [4Fe-4S] cluster site. [2Fe-2S] cluster is bound by residues cysteine 113, cysteine 144, cysteine 204, and arginine 276.

Belongs to the radical SAM superfamily. Biotin synthase family. In terms of assembly, homodimer. The cofactor is [4Fe-4S] cluster. [2Fe-2S] cluster serves as cofactor.

The enzyme catalyses (4R,5S)-dethiobiotin + (sulfur carrier)-SH + 2 reduced [2Fe-2S]-[ferredoxin] + 2 S-adenosyl-L-methionine = (sulfur carrier)-H + biotin + 2 5'-deoxyadenosine + 2 L-methionine + 2 oxidized [2Fe-2S]-[ferredoxin]. The protein operates within cofactor biosynthesis; biotin biosynthesis; biotin from 7,8-diaminononanoate: step 2/2. Functionally, catalyzes the conversion of dethiobiotin (DTB) to biotin by the insertion of a sulfur atom into dethiobiotin via a radical-based mechanism. This is Biotin synthase from Neisseria meningitidis serogroup A / serotype 4A (strain DSM 15465 / Z2491).